Consider the following 284-residue polypeptide: Tropomyosin Lep s 1.0101 (284 aa).

A coiled-coil region spans residues 1-273 (MEAIKKKMQA…KDRYRALADE (273 aa)). A compositionally biased stretch (basic and acidic residues) spans 155 to 171 (AEDADGKSDEVSRKMAQ). A disordered region spans residues 155-187 (AEDADGKSDEVSRKMAQVEDDLEVAEDRVKSGD).

This sequence belongs to the tropomyosin family. Homodimer.

In terms of biological role, tropomyosin, in association with the troponin complex, plays a central role in the calcium dependent regulation of muscle contraction. The polypeptide is Tropomyosin Lep s 1.0101 (Lepisma saccharinum (Silverfish)).